The sequence spans 200 residues: Holliday junction branch migration complex subunit RuvA (200 aa).

Residues 1–63 (MYAYVKGKLT…EDAQLLYGFS (63 aa)) form a domain I region. Residues 64-142 (SEEEKDMFLS…ITEEDSDSLL (79 aa)) are domain II. Residues 143-149 (QVDATST) are flexible linker. The domain III stretch occupies residues 150-200 (VQDQFVQEAMLALEALGYSKRELAKVEKTLNKNKYDSVDEAVKAGLQLVVS).

The protein belongs to the RuvA family. In terms of assembly, homotetramer. Forms an RuvA(8)-RuvB(12)-Holliday junction (HJ) complex. HJ DNA is sandwiched between 2 RuvA tetramers; dsDNA enters through RuvA and exits via RuvB. An RuvB hexamer assembles on each DNA strand where it exits the tetramer. Each RuvB hexamer is contacted by two RuvA subunits (via domain III) on 2 adjacent RuvB subunits; this complex drives branch migration. In the full resolvosome a probable DNA-RuvA(4)-RuvB(12)-RuvC(2) complex forms which resolves the HJ.

Its subcellular location is the cytoplasm. In terms of biological role, the RuvA-RuvB-RuvC complex processes Holliday junction (HJ) DNA during genetic recombination and DNA repair, while the RuvA-RuvB complex plays an important role in the rescue of blocked DNA replication forks via replication fork reversal (RFR). RuvA specifically binds to HJ cruciform DNA, conferring on it an open structure. The RuvB hexamer acts as an ATP-dependent pump, pulling dsDNA into and through the RuvAB complex. HJ branch migration allows RuvC to scan DNA until it finds its consensus sequence, where it cleaves and resolves the cruciform DNA. The protein is Holliday junction branch migration complex subunit RuvA of Staphylococcus aureus (strain USA300).